A 355-amino-acid chain; its full sequence is Mu-like prophage FluMu protein gp47 (355 aa).

The protein belongs to the Mu gp47/PBSX XkdT family.

In Haemophilus influenzae (strain ATCC 51907 / DSM 11121 / KW20 / Rd), this protein is Mu-like prophage FluMu protein gp47.